The chain runs to 424 residues: L-glutamine:2-deoxy-scyllo-inosose aminotransferase (424 aa).

At Lys-202 the chain carries N6-(pyridoxal phosphate)lysine.

This sequence belongs to the DegT/DnrJ/EryC1 family. L-glutamine:2-deoxy-scyllo-inosose/scyllo-inosose aminotransferase subfamily. It depends on pyridoxal 5'-phosphate as a cofactor.

The catalysed reaction is 2-deoxy-L-scyllo-inosose + L-glutamine = 2-deoxy-scyllo-inosamine + 2-oxoglutaramate. The enzyme catalyses 3-amino-2,3-dideoxy-scyllo-inosose + L-glutamine = 2-deoxystreptamine + 2-oxoglutaramate. The protein operates within metabolic intermediate biosynthesis; 2-deoxystreptamine biosynthesis; 2-deoxystreptamine from D-glucose 6-phosphate: step 2/4. It participates in metabolic intermediate biosynthesis; 2-deoxystreptamine biosynthesis; 2-deoxystreptamine from D-glucose 6-phosphate: step 4/4. It functions in the pathway antibiotic biosynthesis; neomycin biosynthesis. Functionally, catalyzes the PLP-dependent transamination of 2-deoxy-scyllo-inosose (2-DOI) to form 2-deoxy-scyllo-inosamine (2-DOIA) using L-glutamine as the amino donor. Also catalyzes the transamination of 3-amino-2,3-dideoxy-scyllo-inosose (keto-2-DOIA) into 2-deoxystreptamine (2-DOS). The protein is L-glutamine:2-deoxy-scyllo-inosose aminotransferase (neoB) of Streptomyces fradiae (Streptomyces roseoflavus).